The primary structure comprises 204 residues: Minor allergen Alt a 7 (204 aa).

The Flavodoxin-like domain maps to 5–195 (IAIVYYSMYG…NIAQAQGKAF (191 aa)).

The protein belongs to the WrbA family.

It is found in the cytoplasm. The chain is Minor allergen Alt a 7 (ALTA7) from Alternaria alternata (Alternaria rot fungus).